Here is a 284-residue protein sequence, read N- to C-terminus: 2-dehydro-3-deoxyphosphooctonate aldolase (284 aa).

Belongs to the KdsA family.

The protein resides in the cytoplasm. It carries out the reaction D-arabinose 5-phosphate + phosphoenolpyruvate + H2O = 3-deoxy-alpha-D-manno-2-octulosonate-8-phosphate + phosphate. It functions in the pathway carbohydrate biosynthesis; 3-deoxy-D-manno-octulosonate biosynthesis; 3-deoxy-D-manno-octulosonate from D-ribulose 5-phosphate: step 2/3. It participates in bacterial outer membrane biogenesis; lipopolysaccharide biosynthesis. This Histophilus somni (strain 2336) (Haemophilus somnus) protein is 2-dehydro-3-deoxyphosphooctonate aldolase.